We begin with the raw amino-acid sequence, 1274 residues long: Enamelin (1274 aa).

An N-terminal signal peptide occupies residues 1–38 (MLLLQCRNPTSPPKPCGLVPNVKMSLLVFLGLLGVSAA). The span at 103-115 (PVPNGWQQPPMPN) shows a compositional bias: pro residues. Disordered regions lie at residues 103–413 (PVPN…VGAN), 476–610 (IGAN…NNPN), 668–700 (PFQS…KHFP), 712–734 (LPPL…YGSR), and 753–814 (YIKS…EEMN). The span at 117 to 127 (PSKTDQTQETA) shows a compositional bias: polar residues. Residues 128-142 (KPNQTNPQEPQPQKQ) show a composition bias toward low complexity. Asn-130 is a glycosylation site (N-linked (GlcNAc...) asparagine). A compositionally biased stretch (basic and acidic residues) spans 143 to 158 (PLKEPPNEAARAKDDA). A compositionally biased stretch (pro residues) spans 174–185 (YPQPPWPIPQRG). Ser-196 and Ser-219 each carry phosphoserine. Over residues 225–239 (DYEKPKEKDPPKPED) the composition is skewed to basic and acidic residues. Positions 249–272 (ASTNSTVPDANATQSIPEGGNDTS) are enriched in polar residues. N-linked (GlcNAc...) asparagine glycosylation is found at Asn-252, Asn-259, and Asn-269. The segment covering 273–287 (PIGNTGPGPNAGNNP) has biased composition (low complexity). Residue Asn-300 is glycosylated (N-linked (GlcNAc...) asparagine). The segment covering 318-330 (PNIYENYPYPNYP) has biased composition (low complexity). Composition is skewed to polar residues over residues 331–344 (SERQ…QGPR), 486–503 (SIGT…TNPA), 522–549 (TNPS…QASN), and 565–574 (VTVSHNMKTQ). Residues 575–587 (NPKEKSLGQKERT) show a composition bias toward basic and acidic residues. Polar residues predominate over residues 588-598 (VTPTKDASNPW). The segment covering 715-727 (LKEDYGRQDENLR) has biased composition (basic and acidic residues). Residues 753–766 (YIKSNPWDKSSPST) are compositionally biased toward polar residues. Residues 787-801 (QYNEEDPIDPNEDES) are compositionally biased toward acidic residues. N-linked (GlcNAc...) asparagine glycosylation occurs at Asn-1066. Disordered regions lie at residues 1071–1097 (KLTA…PYSG) and 1109–1128 (SEAS…DLGG).

Post-translationally, phosphorylated by FAM20C in vitro. Expressed in developing teeth.

The protein localises to the secreted. Its subcellular location is the extracellular space. It is found in the extracellular matrix. Its function is as follows. Involved in the mineralization and structural organization of enamel. Involved in the extension of enamel during the secretory stage of dental enamel formation. The chain is Enamelin (Enam) from Mus musculus (Mouse).